The following is a 147-amino-acid chain: Protein SPMIP3 (147 aa).

The chain is Protein SPMIP3 from Homo sapiens (Human).